The following is a 1782-amino-acid chain: Signal-induced proliferation-associated 1-like protein 1 (1782 aa).

Disordered stretches follow at residues 1-28 (MTSL…GAPK), 47-125 (GSSV…VSLN), and 140-171 (KNKT…RRIR). Residues 84-94 (PPRKENVKESS) show a composition bias toward basic and acidic residues. A compositionally biased stretch (low complexity) spans 95-125 (RSSQEIETSSCLESLSSKGSPVSQGSSVSLN). A phosphoserine mark is found at Ser162, Ser187, Ser193, Ser208, Ser255, and Ser288. The segment at 277-297 (EREKPLKRRSKSETGDSSIFR) is disordered. The Rap-GAP domain occupies 599–816 (LMKLDEQGLN…RTRQEYLKDL (218 aa)). A PDZ domain is found at 953–1031 (EMTLRRNGLG…VVIIPPHDDC (79 aa)). 2 disordered regions span residues 1069-1128 (QRNA…RLSP) and 1144-1213 (SQCR…SLAD). 7 positions are modified to phosphoserine: Ser1078, Ser1087, Ser1116, Ser1127, Ser1149, Ser1170, and Ser1181. The span at 1080-1093 (QVPSQLQSPMTSRL) shows a compositional bias: polar residues. Positions 1149 to 1159 (SPSNLSSSSET) are enriched in low complexity. Over residues 1186 to 1205 (DRQNTQSDISGSGKSTPSWQ) the composition is skewed to polar residues. Phosphoserine occurs at positions 1234 and 1249. The interval 1247–1285 (HLSPNKQGHSDSHYSSHSSSNTLSSNASSAHSDEKWYDG) is disordered. The span at 1261–1276 (SSHSSSNTLSSNASSA) shows a compositional bias: low complexity. Position 1305 is a phosphoserine; by PLK2 (Ser1305). The segment at 1307–1342 (IDTASYGPSHGSTASLGASTSSPRSGPGKEKVAPLW) is disordered. Thr1309 bears the Phosphothreonine; by PLK2 mark. Residues 1315–1328 (SHGSTASLGASTSS) show a composition bias toward low complexity. The residue at position 1328 (Ser1328) is a Phosphoserine; by CDK5. A Phosphoserine modification is found at Ser1345. The span at 1358–1368 (TEGHGMDRKAE) shows a compositional bias: basic and acidic residues. The interval 1358–1454 (TEGHGMDRKA…SSSGPRTFYP (97 aa)) is disordered. A phosphoserine mark is found at Ser1369, Ser1370, Ser1391, Ser1410, and Ser1412. The span at 1378–1410 (KSQGGSSPLSRENSTFSINDAASHTSTMSSRHS) shows a compositional bias: polar residues. The span at 1432-1447 (SSQLAPSFSSSSSSSS) shows a compositional bias: low complexity. 2 positions are modified to phosphoserine: Ser1507 and Ser1528. Thr1530 carries the phosphothreonine modification. A phosphoserine mark is found at Ser1533, Ser1544, Ser1547, Ser1564, and Ser1567. Arg1580 carries the post-translational modification Asymmetric dimethylarginine. A phosphoserine mark is found at Ser1582, Ser1624, Ser1626, Ser1629, Ser1687, Ser1690, Ser1707, Ser1708, and Ser1712. The interval 1625–1647 (ASDSSLTDIQETRRQPIPDPGLM) is disordered. A coiled-coil region spans residues 1713 to 1773 (PTLASKVDQL…ASDKLKKFTE (61 aa)).

Interacts with DLG4, PDLIM5, PDLIM7 and LZTS3. Interacts with the actin cytoskeleton. Interacts (via PDZ domain) with EPHA4 (via PDZ motif); controls neuronal morphology through regulation of the RAP1 (RAP1A or RAP1B) and RAP2 (RAP2A, RAP2B or RAP2C) GTPases. In terms of processing, ubiquitinated and degraded by the SCF(BTRC) following phosphorylation by PLK2. Phosphorylated at Ser-1328 by CDK5, creating a docking site for the POLO box domains of PLK2. Subsequently, PLK2 binds and phosphorylates SIPA1L1, leading to ubiquitination and degradation by the proteasome.

It localises to the cytoplasm. Its subcellular location is the cytoskeleton. The protein resides in the postsynaptic density. The protein localises to the synapse. It is found in the synaptosome. Functionally, stimulates the GTPase activity of RAP2A. Promotes reorganization of the actin cytoskeleton and recruits DLG4 to F-actin. Contributes to the regulation of dendritic spine morphogenesis. In Mus musculus (Mouse), this protein is Signal-induced proliferation-associated 1-like protein 1 (Sipa1l1).